The sequence spans 387 residues: Calcium sensing receptor, chloroplastic (387 aa).

The N-terminal 33 residues, 1-33, are a transit peptide targeting the chloroplast; sequence MAMAEMATKSSLSAKLTLPSSSTKKTLSLRQVS. Residues 34–186 are Lumenal, thylakoid-facing; sequence VSLPTSTSIS…TMDTISSADP (153 aa). Residues 187–207 form a helical membrane-spanning segment; it reads SVIVVAAGAAFLAYLLLPPVF. Over 208–387 the chain is Stromal; the sequence is SAISFNFRGY…SGTKFLPSSD (180 aa). The region spanning 231-352 is the Rhodanese domain; that stretch reads CTKNYLMVDI…WLQSRLGTDS (122 aa). T380 bears the Phosphothreonine mark.

Post-translationally, phosphorylation seems to be light-dependent. As to expression, predominantly expressed in the shoot, including guard cells.

The protein resides in the plastid. It localises to the chloroplast thylakoid membrane. Its function is as follows. Modulates cytoplasmic Ca(2+) concentration and is crucial for proper stomatal regulation in response to elevated levels of external Ca(2+). May function by regulating concentrations of inositol 1,4,5-trisphosphate (IP3), which in turn triggers release of Ca(2+) from internal stores. May play a role in de-etiolation. In Arabidopsis thaliana (Mouse-ear cress), this protein is Calcium sensing receptor, chloroplastic (CAS).